A 93-amino-acid polypeptide reads, in one-letter code: Small ribosomal subunit protein uS19 (93 aa).

It belongs to the universal ribosomal protein uS19 family.

In terms of biological role, protein S19 forms a complex with S13 that binds strongly to the 16S ribosomal RNA. This chain is Small ribosomal subunit protein uS19, found in Wolinella succinogenes (strain ATCC 29543 / DSM 1740 / CCUG 13145 / JCM 31913 / LMG 7466 / NCTC 11488 / FDC 602W) (Vibrio succinogenes).